Consider the following 185-residue polypeptide: F-box protein At1g61340 (185 aa).

An F-box domain is found at 78-126; sequence SRELEDLPLDILVRIICGVEHEDLKQLFHVSKTIREATMIAKQSHFAYS.

The protein is F-box protein At1g61340 of Arabidopsis thaliana (Mouse-ear cress).